The primary structure comprises 211 residues: Urease accessory protein UreG (211 aa).

Position 13-20 (13-20 (GPVGSGKT)) interacts with GTP.

This sequence belongs to the SIMIBI class G3E GTPase family. UreG subfamily. As to quaternary structure, homodimer. UreD, UreF and UreG form a complex that acts as a GTP-hydrolysis-dependent molecular chaperone, activating the urease apoprotein by helping to assemble the nickel containing metallocenter of UreC. The UreE protein probably delivers the nickel.

The protein localises to the cytoplasm. Facilitates the functional incorporation of the urease nickel metallocenter. This process requires GTP hydrolysis, probably effectuated by UreG. The polypeptide is Urease accessory protein UreG (Alkalilimnicola ehrlichii (strain ATCC BAA-1101 / DSM 17681 / MLHE-1)).